The following is a 310-amino-acid chain: 4-diphosphocytidyl-2-C-methyl-D-erythritol kinase (310 aa).

The active site involves lysine 12. An ATP-binding site is contributed by 97 to 107; that stretch reads PIGAGLAGGSS. Aspartate 139 is an active-site residue.

This sequence belongs to the GHMP kinase family. IspE subfamily.

It carries out the reaction 4-CDP-2-C-methyl-D-erythritol + ATP = 4-CDP-2-C-methyl-D-erythritol 2-phosphate + ADP + H(+). Its pathway is isoprenoid biosynthesis; isopentenyl diphosphate biosynthesis via DXP pathway; isopentenyl diphosphate from 1-deoxy-D-xylulose 5-phosphate: step 3/6. Catalyzes the phosphorylation of the position 2 hydroxy group of 4-diphosphocytidyl-2C-methyl-D-erythritol. The protein is 4-diphosphocytidyl-2-C-methyl-D-erythritol kinase of Synechococcus sp. (strain CC9311).